The primary structure comprises 950 residues: Sodium/calcium exchanger Calx (950 aa).

The signal sequence occupies residues 1 to 22; sequence MQLLLKSIFTCALFVIFVYATA. Residues 23–120 are Extracellular-facing; the sequence is QSLLKVQETE…PQRNISVGDR (98 aa). N-linked (GlcNAc...) asparagine glycans are attached at residues asparagine 39, asparagine 47, and asparagine 114. The chain crosses the membrane as a helical span at residues 121 to 141; sequence LVRGFVYFVLLIYLFVGVSII. Over 142–179 the chain is Cytoplasmic; it reads ADRFMAAIEAITSIERAVVVKGPNNTKQVMHVRIWNET. A helical transmembrane segment spans residues 180 to 200; sequence VANLTLMALGSSAPEILLSVI. Over 201–216 the chain is Extracellular; it reads EIYAKDFESGDLGPGT. Residues 217-237 form a helical membrane-spanning segment; that stretch reads IVGSAAYNLFMIIAVCMIWIP. Topologically, residues 238 to 257 are cytoplasmic; the sequence is AGEVRRIRHLRVFFVTALFS. Helical transmembrane passes span 258-278 and 279-299; these read VFAY…VILV and WEAI…YIAE. At 300–749 the chain is on the cytoplasmic side; sequence RRLLVYKYMD…NDDEEEEVPS (450 aa). Positions 301 to 318 are corresponds to the exchanger inhibitory peptide (XIP) found in other sodium/calcium exchange proteins and thought to be involved in calmodulin binding; sequence RLLVYKYMDKNYRVNKRG. The Calx-beta 1 domain maps to 440 to 551; the sequence is DPIRMYFEPG…MIATVMILDD (112 aa). Ca(2+) is bound by residues glutamate 455, aspartate 490, aspartate 515, aspartate 516, valine 518, glutamate 520, glutamate 523, aspartate 550, aspartate 551, and aspartate 552. The Calx-beta 2 domain occupies 555-694; it reads GIFAFTDSVF…LTTAYVRIRE (140 aa). Residues 750–770 traverse the membrane as a helical segment; it reads CFSYVSHFVCLFWKVLFAFVP. The Extracellular segment spans residues 771–775; that stretch reads PTDIC. The chain crosses the membrane as a helical span at residues 776–796; that stretch reads GGYVTFVVSIFVIGVITAIIG. Topologically, residues 797 to 813 are cytoplasmic; it reads DAASYFGCALNIKDSVT. A helical membrane pass occupies residues 814–834; it reads AILFVALGTSIPDTFASMIAA. At 835–848 the chain is on the extracellular side; the sequence is KHDEGADNCIGNVT. N-linked (GlcNAc...) asparagine glycosylation occurs at asparagine 846. Residues 849–869 form a helical membrane-spanning segment; that stretch reads GSNAVNVFLGIGLAWTIAAVY. Topologically, residues 870 to 883 are cytoplasmic; the sequence is HSSHGMTFNVEPGT. A helical membrane pass occupies residues 884 to 904; that stretch reads IGFAVALFCGEALIAIMLIMF. The Extracellular portion of the chain corresponds to 905–923; it reads RRWHKGIGAELGGPKVSKY. A helical membrane pass occupies residues 924–944; it reads ISAAILVFLWVFYVVICILEA. Residues 945-950 are Cytoplasmic-facing; the sequence is YDVIRV.

Belongs to the Ca(2+):cation antiporter (CaCA) (TC 2.A.19) family. SLC8 subfamily. Ubiquitously expressed with higher expression in head compared to body (at protein level). Enriched in photoreceptor cells of the eye (at protein level). In the adult head, expressed in retina, optic ganglia and all neuronal tissues.

It is found in the cell membrane. It localises to the cell projection. Its subcellular location is the rhabdomere membrane. It catalyses the reaction Ca(2+)(in) + 3 Na(+)(out) = Ca(2+)(out) + 3 Na(+)(in). With respect to regulation, activated by a Na(+) electrochemical gradient but also undergoes Na(2+)-dependent inactivation. Inhibited by micromolar levels of cytoplasmic Ca(2+), which is the opposite of most characterized mammalian homologs. Its activity is regulated as follows. Exhibits greater extent of inhibition by Ca(2+) than isoform D/1.2. Exhibits greater Na(2+)-dependent inactivation than isoform A/1.1, probably due to greater stability of the inactive Na(2+)-bound form. Its function is as follows. Na(+)/Ca(2+) antiporter that couples the energy of a Na(+) electrochemical gradient to the movement of Ca(2+) against an electrochemical gradient across a membrane, which contributes to the regulation of cytoplasmic Ca(2+) levels. Mediates Na(+)/Ca(2+) exchange in photoreceptor cells and involved in controlling Ca(2+) levels during phototransduction, affecting magnitude of the photoresponse, activation kinetics, signal amplification, response termination, and light adaptation. Light induced depolarization of photoreceptor cells, resulting in Na(+) and Ca(2+) entry through trp/transient receptor potential protein channels, is essential for photoreceptor cell function but may result in toxic levels of cytoplasmic Ca(2+). Na(+)/Ca(2+) antiporter regulation of Ca(2+) levels protects photoreceptor cells from light-dependent retinal degeneration. This Drosophila melanogaster (Fruit fly) protein is Sodium/calcium exchanger Calx.